The following is a 167-amino-acid chain: Insertion element IS1 2 protein InsB (167 aa).

It belongs to the transposase 27 family.

Functionally, absolutely required for transposition of IS1. The polypeptide is Insertion element IS1 2 protein InsB (insB2) (Escherichia coli (strain K12)).